The primary structure comprises 335 residues: Calcium/calmodulin-dependent protein kinase type I (335 aa).

Positions 31–291 (YRVGRVLGGG…AADALKHPFL (261 aa)) constitute a Protein kinase domain. 37 to 45 (LGGGTYATV) is an ATP binding site. Residue aspartate 154 is the Proton acceptor of the active site. Threonine 192 bears the Phosphothreonine; by autocatalysis mark. The tract at residues 310-334 (NARKTFRTAYNAVRAFNTWKKLENK) is calmodulin-binding.

The protein belongs to the protein kinase superfamily. CAMK Ser/Thr protein kinase family. CaMK subfamily.

Its subcellular location is the cytoplasm. It catalyses the reaction L-seryl-[protein] + ATP = O-phospho-L-seryl-[protein] + ADP + H(+). It carries out the reaction L-threonyl-[protein] + ATP = O-phospho-L-threonyl-[protein] + ADP + H(+). Its function is as follows. Important in cell cycle regulation. The sequence is that of Calcium/calmodulin-dependent protein kinase type I (cmk1) from Schizosaccharomyces pombe (strain 972 / ATCC 24843) (Fission yeast).